We begin with the raw amino-acid sequence, 508 residues long: Steroid 17-alpha-hydroxylase/17,20 lyase (508 aa).

Cys-442 contributes to the heme binding site.

Belongs to the cytochrome P450 family. It depends on heme as a cofactor.

Its subcellular location is the endoplasmic reticulum membrane. The protein resides in the microsome membrane. It carries out the reaction a C21-steroid + reduced [NADPH--hemoprotein reductase] + O2 = a 17alpha-hydroxy-C21-steroid + oxidized [NADPH--hemoprotein reductase] + H2O + H(+). It catalyses the reaction progesterone + reduced [NADPH--hemoprotein reductase] + O2 = 17alpha-hydroxyprogesterone + oxidized [NADPH--hemoprotein reductase] + H2O + H(+). The enzyme catalyses pregnenolone + reduced [NADPH--hemoprotein reductase] + O2 = 17alpha-hydroxypregnenolone + oxidized [NADPH--hemoprotein reductase] + H2O + H(+). The catalysed reaction is 17alpha-hydroxyprogesterone + reduced [NADPH--hemoprotein reductase] + O2 = androst-4-ene-3,17-dione + acetate + oxidized [NADPH--hemoprotein reductase] + H2O + 2 H(+). It carries out the reaction 17alpha-hydroxyprogesterone + reduced [NADPH--hemoprotein reductase] + O2 = 16alpha,17alpha-dihydroxyprogesterone + oxidized [NADPH--hemoprotein reductase] + H2O + H(+). It catalyses the reaction 16alpha,17alpha-dihydroxyprogesterone + reduced [NADPH--hemoprotein reductase] + O2 = 6beta,16alpha,17alpha-trihydroxyprogesterone + oxidized [NADPH--hemoprotein reductase] + H2O + H(+). The enzyme catalyses 17alpha-hydroxypregnenolone + reduced [NADPH--hemoprotein reductase] + O2 = 3beta-hydroxyandrost-5-en-17-one + acetate + oxidized [NADPH--hemoprotein reductase] + H2O + 2 H(+). The catalysed reaction is 16alpha,17alpha-dihydroxypregnenolone + reduced [NADPH--hemoprotein reductase] + O2 = 3beta,16alpha-dihydroxy-androst-5-en-17-one + acetate + oxidized [NADPH--hemoprotein reductase] + H2O + 2 H(+). It carries out the reaction 3beta-hydroxyandrost-5-en-17-one + reduced [NADPH--hemoprotein reductase] + O2 = 3beta,16alpha-dihydroxy-androst-5-en-17-one + oxidized [NADPH--hemoprotein reductase] + H2O + H(+). It catalyses the reaction androst-4-ene-3,17-dione + reduced [NADPH--hemoprotein reductase] + O2 = 16alpha-hydroxyandrost-4-ene-3,17-dione + oxidized [NADPH--hemoprotein reductase] + H2O + H(+). It functions in the pathway steroid hormone biosynthesis. Its pathway is steroid biosynthesis; glucocorticoid biosynthesis. Its activity is regulated as follows. Regulated predominantly by intracellular cAMP levels. The 17,20-lyase activity is stimulated by cytochrome b5, which acts as an allosteric effector increasing the Vmax of the lyase activity. A cytochrome P450 monooxygenase involved in corticoid and androgen biosynthesis. Catalyzes 17-alpha hydroxylation of C21 steroids, which is common for both pathways. A second oxidative step, required only for androgen synthesis, involves an acyl-carbon cleavage. The 17-alpha hydroxy intermediates, as part of adrenal glucocorticoids biosynthesis pathway, are precursors of cortisol. Hydroxylates steroid hormones, pregnenolone and progesterone to form 17-alpha hydroxy metabolites, followed by the cleavage of the C17-C20 bond to form C19 steroids, dehydroepiandrosterone (DHEA) and androstenedione. Has 16-alpha hydroxylase activity. Catalyzes 16-alpha hydroxylation of 17-alpha hydroxy pregnenolone, followed by the cleavage of the C17-C20 bond to form 16-alpha-hydroxy DHEA. Also 16-alpha hydroxylates androgens, relevant for estriol synthesis. Mechanistically, uses molecular oxygen inserting one oxygen atom into a substrate, and reducing the second into a water molecule, with two electrons provided by NADPH via cytochrome P450 reductase (CPR; NADPH-ferrihemoprotein reductase). The protein is Steroid 17-alpha-hydroxylase/17,20 lyase (CYP17A1) of Cavia porcellus (Guinea pig).